A 295-amino-acid polypeptide reads, in one-letter code: Guided entry of tail-anchored proteins factor CAMLG (295 aa).

Disordered stretches follow at residues 1 to 73 (MEPM…ILNP) and 127 to 148 (GVEL…RGSH). The Cytoplasmic segment spans residues 1-188 (MEPMPSATDG…RTTEEFDSFR (188 aa)). Residues 15-24 (ATPSGLSASQ) show a composition bias toward polar residues. Ser-53 bears the Phosphoserine mark. Residues 127-138 (GVELRQRNRGDL) are compositionally biased toward basic and acidic residues. Residues 189 to 206 (IFRLVGCALLALVVRAFV) traverse the membrane as a helical segment. Over 207–208 (CK) the chain is Lumenal. Cys-207 and Cys-283 form a disulfide bridge. The chain crosses the membrane as a helical span at residues 209 to 227 (YLSIFAPFLTLQLAYMGLY). Residues 228–268 (KYFPKGEKKVKTTVLTAALLLSGIPAEVINRSMDTYSKMGE) lie on the Cytoplasmic side of the membrane. The chain crosses the membrane as a helical span at residues 269–287 (VFTDLCVYFFTFIFCHEVL). Topologically, residues 288 to 295 (EYWGPEVP) are lumenal.

In terms of assembly, component of the Golgi to ER traffic (GET) complex, which is composed of GET1/WRB, CAMLG/GET2 and GET3/TRC40. Within the complex, GET1 and CAMLG form a heterotetramer which is stabilized by phosphatidylinositol binding and which binds to the GET3 homodimer. Interacts (via C-terminus) with GET1. Interacts (via N-terminus) with GET3. GET3 shows a higher affinity for CAMLG than for GET1. Interacts (via N-terminus) with TNFRSF13B/TACI (via C-terminus). In terms of tissue distribution, in the central nervous system, expressed in astrocytes, microglia and neurons (at protein level).

Its subcellular location is the endoplasmic reticulum membrane. Its function is as follows. Required for the post-translational delivery of tail-anchored (TA) proteins to the endoplasmic reticulum. Together with GET1/WRB, acts as a membrane receptor for soluble GET3/TRC40, which recognizes and selectively binds the transmembrane domain of TA proteins in the cytosol. Required for the stability of GET1. Stimulates calcium signaling in T cells through its involvement in elevation of intracellular calcium. Essential for the survival of peripheral follicular B cells. The protein is Guided entry of tail-anchored proteins factor CAMLG of Rattus norvegicus (Rat).